We begin with the raw amino-acid sequence, 919 residues long: DNA double-strand break repair Rad50 ATPase (919 aa).

ATP contacts are provided by residues 33–39 (NGAGKST) and Gln-143. Coiled coils occupy residues 208–268 (MTLR…MLVN), 315–379 (HEVA…RRYT), and 414–458 (ESVL…LEES). In terms of domain architecture, Zinc-hook spans 417–516 (LERLDAVIND…EASRLQDKRR (100 aa)). Zn(2+)-binding residues include Cys-464 and Cys-467. 3 coiled-coil regions span residues 486–515 (EAER…QDKR), 541–595 (EDLA…LQRL), and 635–749 (AYRS…RKAS).

It belongs to the SMC family. RAD50 subfamily. As to quaternary structure, homodimer. Forms a heterotetramer composed of two Mre11 subunits and two Rad50 subunits. Zn(2+) is required as a cofactor.

Its function is as follows. Part of the Rad50/Mre11 complex, which is involved in the early steps of DNA double-strand break (DSB) repair. The complex may facilitate opening of the processed DNA ends to aid in the recruitment of HerA and NurA. Rad50 controls the balance between DNA end bridging and DNA resection via ATP-dependent structural rearrangements of the Rad50/Mre11 complex. The chain is DNA double-strand break repair Rad50 ATPase from Aeropyrum pernix (strain ATCC 700893 / DSM 11879 / JCM 9820 / NBRC 100138 / K1).